Here is a 185-residue protein sequence, read N- to C-terminus: Elongation factor P (185 aa).

This sequence belongs to the elongation factor P family.

It localises to the cytoplasm. It participates in protein biosynthesis; polypeptide chain elongation. Functionally, involved in peptide bond synthesis. Stimulates efficient translation and peptide-bond synthesis on native or reconstituted 70S ribosomes in vitro. Probably functions indirectly by altering the affinity of the ribosome for aminoacyl-tRNA, thus increasing their reactivity as acceptors for peptidyl transferase. In Mesomycoplasma hyopneumoniae (strain J / ATCC 25934 / NCTC 10110) (Mycoplasma hyopneumoniae), this protein is Elongation factor P.